We begin with the raw amino-acid sequence, 156 residues long: Inorganic triphosphatase (156 aa).

A CYTH domain is found at 2–148 (GKEIEKKFIV…PRYLNSNLVK (147 aa)). Tyr29 (proton acceptor) is an active-site residue.

As to quaternary structure, homodimer.

It carries out the reaction triphosphate + H2O = phosphate + diphosphate. The enzyme catalyses ATP + H2O = ADP + phosphate + H(+). Involved in the hydrolysis of the beta-gamma-phosphoanhydride linkage of triphosphate-containing substrates (inorganic or nucleoside-linked). Catalyzes vigorously the hydrolysis of inorganic triphosphate (PPPi), however it can also catalyze the hydrolysis of ATP to ADP and phosphate. It can use ribonucleotides such as GTP, CTP, or UTP and deoxynucleotides such as dATP, dGTP, dCTP, and dTTP. The chain is Inorganic triphosphatase from Acetivibrio thermocellus (strain ATCC 27405 / DSM 1237 / JCM 9322 / NBRC 103400 / NCIMB 10682 / NRRL B-4536 / VPI 7372) (Clostridium thermocellum).